Consider the following 209-residue polypeptide: Small ribosomal subunit protein uS4 (209 aa).

Residues 98–164 (RRLDNVVYRL…LPVKNAIELN (67 aa)) form the S4 RNA-binding domain.

The protein belongs to the universal ribosomal protein uS4 family. In terms of assembly, part of the 30S ribosomal subunit. Contacts protein S5. The interaction surface between S4 and S5 is involved in control of translational fidelity.

In terms of biological role, one of the primary rRNA binding proteins, it binds directly to 16S rRNA where it nucleates assembly of the body of the 30S subunit. Its function is as follows. With S5 and S12 plays an important role in translational accuracy. The polypeptide is Small ribosomal subunit protein uS4 (Thermosipho africanus (strain TCF52B)).